A 292-amino-acid chain; its full sequence is High-affinity heme uptake system protein IsdE (292 aa).

The signal sequence occupies residues M1–S19. C20 is lipidated: N-palmitoyl cysteine. C20 is lipidated: S-diacylglycerol cysteine. In terms of domain architecture, Fe/B12 periplasmic-binding spans R35–K291. 6 residues coordinate heme: V41, A42, S60, Y61, M78, and H229.

Belongs to the bacterial solute-binding protein 8 family. Heme b serves as cofactor.

It localises to the cell membrane. Involved in heme (porphyrin) scavenging. Binds Fe(2+) and Fe(3+) heme but the largest fraction is Fe(2+) heme. Functions as a high-affinity heme binding protein and probably has a role in relaying heme-iron from cell wall-anchored isd proteins receptors to the probable permease IsdF. This chain is High-affinity heme uptake system protein IsdE (isdE), found in Staphylococcus aureus (strain Mu3 / ATCC 700698).